The sequence spans 500 residues: Glycogen synthase (500 aa).

Position 20 (Lys-20) interacts with ADP-alpha-D-glucose.

The protein belongs to the glycosyltransferase 1 family. Bacterial/plant glycogen synthase subfamily.

It catalyses the reaction [(1-&gt;4)-alpha-D-glucosyl](n) + ADP-alpha-D-glucose = [(1-&gt;4)-alpha-D-glucosyl](n+1) + ADP + H(+). The protein operates within glycan biosynthesis; glycogen biosynthesis. Its function is as follows. Synthesizes alpha-1,4-glucan chains using ADP-glucose. This is Glycogen synthase from Desulforudis audaxviator (strain MP104C).